A 551-amino-acid polypeptide reads, in one-letter code: Ubiquitin carboxyl-terminal hydrolase 24 (551 aa).

2 disordered regions span residues 51–104 and 163–188; these read NSSV…SLRV and NEDF…TESV. The USP domain maps to 197–551; that stretch reads RGLINAGNLC…QAYVLFYKQV (355 aa). The Nucleophile role is filled by C206. Positions 329–338 are enriched in polar residues; it reads SKSSVISSAN. Positions 329 to 349 are disordered; sequence SKSSVISSANDDGDEWETVGP. H510 functions as the Proton acceptor in the catalytic mechanism.

Belongs to the peptidase C19 family.

The enzyme catalyses Thiol-dependent hydrolysis of ester, thioester, amide, peptide and isopeptide bonds formed by the C-terminal Gly of ubiquitin (a 76-residue protein attached to proteins as an intracellular targeting signal).. Its function is as follows. Recognizes and hydrolyzes the peptide bond at the C-terminal Gly of ubiquitin. Involved in the processing of poly-ubiquitin precursors as well as that of ubiquitinated proteins. The sequence is that of Ubiquitin carboxyl-terminal hydrolase 24 (UBP24) from Arabidopsis thaliana (Mouse-ear cress).